The sequence spans 318 residues: DNA repair nuclease/redox regulator APEX1 (318 aa).

Positions 1–33 are necessary for interaction with YBX1, binding to RNA, association together with NPM1 to rRNA, endoribonuclease activity on abasic RNA and localization in the nucleoli; the sequence is MPKRGKKGAVAEDGDELKTEPEAKKSKTTAKKN. The interval 1-60 is disordered; that stretch reads MPKRGKKGAVAEDGDELKTEPEAKKSKTTAKKNDKEAAGEGPALYEDPPDQKTSPSGKPA. Residues Lys6 and Lys7 each carry the N6-acetyllysine; by EP300 modification. Positions 8–13 match the Nuclear localization signal (NLS) motif; sequence GAVAED. Residues 16–38 show a composition bias toward basic and acidic residues; it reads ELKTEPEAKKSKTTAKKNDKEAA. A necessary for interaction with NPM1 and for efficient rRNA binding region spans residues 23 to 33; that stretch reads AKKSKTTAKKN. N6-acetyllysine is present on residues Lys27, Lys31, Lys32, and Lys35. Ser54 carries the phosphoserine modification. Residues 64–80 carry the Nuclear export signal (NES) motif; it reads ICSWNVDGLRAWIKKKG. An S-nitrosocysteine; alternate modification is found at Cys65. Cys65 and Cys93 are oxidised to a cystine. Asp70 contacts Mg(2+). The residue at position 93 (Cys93) is an S-nitrosocysteine; alternate. Residue Glu96 coordinates Mg(2+). Residue Tyr171 is part of the active site. Lys197 carries the N6-acetyllysine modification. The Mg(2+) site is built by Asp210 and Asn212. Asp210 serves as the catalytic Proton donor/acceptor. Thr233 carries the post-translational modification Phosphothreonine; by CDK5. Positions 289 to 318 are mitochondrial targeting sequence (MTS); it reads HSLLTALCDSKIRSKALGSDHCPITLYLAL. Asp308 lines the Mg(2+) pocket. Cys310 carries the post-translational modification S-nitrosocysteine.

Belongs to the DNA repair enzymes AP/ExoA family. As to quaternary structure, monomer. Homodimer; disulfide-linked. Component of the SET complex, composed of at least APEX1, SET, ANP32A, HMGB2, NME1 and TREX1. Associates with the dimer XRCC5/XRCC6 in a DNA-dependent manner. Interacts with SIRT1; the interaction is increased in the context of genotoxic stress. Interacts with HDAC1, HDAC2 and HDAC3; the interactions are not dependent on the APEX1 acetylation status. Interacts with XRCC1; the interaction is induced by SIRT1 and increased with the APEX1 acetylated form. Interacts with NPM1 (via N-terminal domain); the interaction is RNA-dependent and decreases in hydrogen peroxide-damaged cells. Interacts (via N-terminus) with YBX1 (via C-terminus); the interaction is increased in presence of APEX1 acetylated at Lys-6 and Lys-7. Interacts with HNRNPL; the interaction is DNA-dependent. Interacts (via N-terminus) with KPNA1 and KPNA2. Interacts with TXN; the interaction stimulates the FOS/JUN AP-1 complex DNA-binding activity in a redox-dependent manner. Interacts with GZMA, KRT8, MDM2, POLB, PRDX6, PRPF19, RPLP0, TOMM20 and WDR77. Binds to CDK5. Mg(2+) serves as cofactor. Requires Mn(2+) as cofactor. Phosphorylated. Phosphorylation by kinase PKC or casein kinase CK2 results in enhanced redox activity that stimulates binding of the FOS/JUN AP-1 complex to its cognate binding site. AP-endodeoxyribonuclease activity is not affected by CK2-mediated phosphorylation. Phosphorylation of Thr-233 by CDK5 in response to MPP(+)/MPTP (1-methyl-4-phenylpyridinium) reduces AP-endodeoxyribonuclease activity resulting in accumulation of DNA damage and contributing to neuronal death. Post-translationally, acetylated on Lys-6 and Lys-7. Acetylation is increased by the transcriptional coactivator EP300 acetyltransferase, genotoxic agents like H(2)O(2) and methyl methanesulfonate (MMS). Acetylation increases its binding affinity to the negative calcium response element (nCaRE) DNA promoter. The acetylated form induces a stronger binding of YBX1 to the Y-box sequence in the MDR1 promoter than the unacetylated form. Deacetylated on lysines. Lys-6 and Lys-7 are deacetylated by SIRT1. In terms of processing, cleaved at Lys-31 by granzyme A to create the mitochondrial form; leading in reduction of binding to DNA, AP endodeoxyribonuclease activity, redox activation of transcription factors and to enhanced cell death. Cleaved by granzyme K; leading to intracellular ROS accumulation and enhanced cell death after oxidative stress. Cys-69 and Cys-93 are nitrosylated in response to nitric oxide (NO) and lead to the exposure of the nuclear export signal (NES). Post-translationally, ubiquitinated by MDM2; leading to translocation to the cytoplasm and proteasomal degradation.

The protein localises to the nucleus. Its subcellular location is the nucleolus. It localises to the nucleus speckle. The protein resides in the endoplasmic reticulum. It is found in the cytoplasm. The protein localises to the mitochondrion. It carries out the reaction a deoxyribonucleotide-2'-deoxyribose-5'-monophosphate-DNA + H2O = a 5'-end 2'-deoxyribose-5'-monophosphate-DNA + a 3'-end 2'-deoxyribonucleotide-DNA + H(+). The enzyme catalyses Exonucleolytic cleavage in the 3'- to 5'-direction to yield nucleoside 5'-phosphates.. The catalysed reaction is a 3'-end 2'-deoxyribonucleotide-3'-phosphoglycolate-DNA + H2O = 2-phosphoglycolate + a 3'-end 2'-deoxyribonucleotide-DNA + H(+). It catalyses the reaction a 3'-end 2'-deoxyribonucleotide-8-oxoguanine-DNA + H2O = 8-oxo-dGMP + a 3'-end 2'-deoxyribonucleotide-DNA + H(+). NPM1 stimulates endodeoxyribonuclease activity on double-stranded DNA with AP sites, but inhibits endoribonuclease activity on single-stranded RNA containing AP sites. Its function is as follows. Multifunctional protein that plays a central role in the cellular response to oxidative stress. The two major activities of APEX1 are DNA repair and redox regulation of transcriptional factors. Functions as an apurinic/apyrimidinic (AP) endodeoxyribonuclease in the base excision repair (BER) pathway of DNA lesions induced by oxidative and alkylating agents. Initiates repair of AP sites in DNA by catalyzing hydrolytic incision of the phosphodiester backbone immediately adjacent to the damage, generating a single-strand break with 5'-deoxyribose phosphate and 3'-hydroxyl ends. Also incises at AP sites in the DNA strand of DNA/RNA hybrids, single-stranded DNA regions of R-loop structures, and single-stranded RNA molecules. Operates at switch sites of immunoglobulin (Ig) constant regions where it mediates Ig isotype class switch recombination. Processes AP sites induced by successive action of AICDA and UNG. Generates staggered nicks in opposite DNA strands resulting in the formation of double-strand DNA breaks that are finally resolved via non-homologous end joining repair pathway. Has 3'-5' exodeoxyribonuclease activity on mismatched deoxyribonucleotides at the 3' termini of nicked or gapped DNA molecules during short-patch BER. Possesses DNA 3' phosphodiesterase activity capable of removing lesions (such as phosphoglycolate and 8-oxoguanine) blocking the 3' side of DNA strand breaks. Also acts as an endoribonuclease involved in the control of single-stranded RNA metabolism. Plays a role in regulating MYC mRNA turnover by preferentially cleaving in between UA and CA dinucleotides of the MYC coding region determinant (CRD). In association with NMD1, plays a role in the rRNA quality control process during cell cycle progression. Acts as a loading factor for POLB onto non-incised AP sites in DNA and stimulates the 5'-terminal deoxyribose 5'-phosphate (dRp) excision activity of POLB. Exerts reversible nuclear redox activity to regulate DNA binding affinity and transcriptional activity of transcriptional factors by controlling the redox status of their DNA-binding domain, such as the FOS/JUN AP-1 complex after exposure to IR. Involved in calcium-dependent down-regulation of parathyroid hormone (PTH) expression by binding to negative calcium response elements (nCaREs). Together with HNRNPL or the dimer XRCC5/XRCC6, associates with nCaRE, acting as an activator of transcriptional repression. May also play a role in the epigenetic regulation of gene expression by participating in DNA demethylation. Stimulates the YBX1-mediated MDR1 promoter activity, when acetylated at Lys-6 and Lys-7, leading to drug resistance. Plays a role in protection from granzyme-mediated cellular repair leading to cell death. Binds DNA and RNA. Associates, together with YBX1, on the MDR1 promoter. Together with NPM1, associates with rRNA. The sequence is that of DNA repair nuclease/redox regulator APEX1 (APEX1) from Pongo pygmaeus (Bornean orangutan).